The following is a 407-amino-acid chain: Probable tRNA sulfurtransferase (407 aa).

The 105-residue stretch at 61-165 (NEITYRLSKI…LDAIYMYEEV (105 aa)) folds into the THUMP domain. Residues 183-184 (ML), 208-209 (HF), Arg-265, Gly-287, and Gln-296 each bind ATP.

The protein belongs to the ThiI family.

Its subcellular location is the cytoplasm. The catalysed reaction is [ThiI sulfur-carrier protein]-S-sulfanyl-L-cysteine + a uridine in tRNA + 2 reduced [2Fe-2S]-[ferredoxin] + ATP + H(+) = [ThiI sulfur-carrier protein]-L-cysteine + a 4-thiouridine in tRNA + 2 oxidized [2Fe-2S]-[ferredoxin] + AMP + diphosphate. The enzyme catalyses [ThiS sulfur-carrier protein]-C-terminal Gly-Gly-AMP + S-sulfanyl-L-cysteinyl-[cysteine desulfurase] + AH2 = [ThiS sulfur-carrier protein]-C-terminal-Gly-aminoethanethioate + L-cysteinyl-[cysteine desulfurase] + A + AMP + 2 H(+). The protein operates within cofactor biosynthesis; thiamine diphosphate biosynthesis. Its function is as follows. Catalyzes the ATP-dependent transfer of a sulfur to tRNA to produce 4-thiouridine in position 8 of tRNAs, which functions as a near-UV photosensor. Also catalyzes the transfer of sulfur to the sulfur carrier protein ThiS, forming ThiS-thiocarboxylate. This is a step in the synthesis of thiazole, in the thiamine biosynthesis pathway. The sulfur is donated as persulfide by IscS. The chain is Probable tRNA sulfurtransferase from Staphylococcus aureus (strain Mu3 / ATCC 700698).